A 219-amino-acid chain; its full sequence is Adenylate kinase (219 aa).

10–15 (GAGKGT) serves as a coordination point for ATP. An NMP region spans residues 30–59 (STGDMLRAAVKAGTPLGQQAKKIMDEGGLV). Residues Thr31, Arg36, 57–59 (GLV), 85–88 (GFPR), and Gln92 each bind AMP. An LID region spans residues 122–159 (GRRVHPGSGRVYHVTHNPPRQEGKDDVTGEDLVQREDD). ATP is bound by residues Arg123 and 132–133 (VY). The disordered stretch occupies residues 128-150 (GSGRVYHVTHNPPRQEGKDDVTG). Over residues 140-150 (PRQEGKDDVTG) the composition is skewed to basic and acidic residues. Arg156 and Arg167 together coordinate AMP. An ATP-binding site is contributed by Arg203.

This sequence belongs to the adenylate kinase family. As to quaternary structure, monomer.

It localises to the cytoplasm. It carries out the reaction AMP + ATP = 2 ADP. The protein operates within purine metabolism; AMP biosynthesis via salvage pathway; AMP from ADP: step 1/1. Catalyzes the reversible transfer of the terminal phosphate group between ATP and AMP. Plays an important role in cellular energy homeostasis and in adenine nucleotide metabolism. In Halorhodospira halophila (strain DSM 244 / SL1) (Ectothiorhodospira halophila (strain DSM 244 / SL1)), this protein is Adenylate kinase.